Here is a 241-residue protein sequence, read N- to C-terminus: Adenosylcobinamide-GDP ribazoletransferase (241 aa).

7 helical membrane-spanning segments follow: residues 34–54, 55–75, 109–129, 133–153, 165–185, 186–206, and 221–241; these read RIPAYFTIVGYIPGLIYFTGS, FLSLNFGIIAPLLSIVLGFYL, VGPFAVFYGVLYVIVFWELIT, PVAFVFGSVFGRYTMDVVLVF, MLFPFNRFLLVPATLFTLPLL, LIDVKLFLVSIFSSWLVGFLI, and VLGGSCLIGQIVVLLILNYLI.

The protein belongs to the CobS family. Requires Mg(2+) as cofactor.

It is found in the cell inner membrane. It carries out the reaction alpha-ribazole + adenosylcob(III)inamide-GDP = adenosylcob(III)alamin + GMP + H(+). It catalyses the reaction alpha-ribazole 5'-phosphate + adenosylcob(III)inamide-GDP = adenosylcob(III)alamin 5'-phosphate + GMP + H(+). It functions in the pathway cofactor biosynthesis; adenosylcobalamin biosynthesis; adenosylcobalamin from cob(II)yrinate a,c-diamide: step 7/7. Its function is as follows. Joins adenosylcobinamide-GDP and alpha-ribazole to generate adenosylcobalamin (Ado-cobalamin). Also synthesizes adenosylcobalamin 5'-phosphate from adenosylcobinamide-GDP and alpha-ribazole 5'-phosphate. The sequence is that of Adenosylcobinamide-GDP ribazoletransferase from Fervidobacterium nodosum (strain ATCC 35602 / DSM 5306 / Rt17-B1).